A 363-amino-acid polypeptide reads, in one-letter code: Ribosome-binding ATPase YchF (363 aa).

One can recognise an OBG-type G domain in the interval 3-256 (FKCGIVGLPN…LEDEEKVDFL (254 aa)). 12 to 17 (NVGKST) is a binding site for ATP. Residues Ser16 and Thr36 each contribute to the Mg(2+) site. The TGS domain occupies 278 to 361 (NLQTYFTAGV…QDGDVMHFRF (84 aa)).

It belongs to the TRAFAC class OBG-HflX-like GTPase superfamily. OBG GTPase family. YchF/OLA1 subfamily. The cofactor is Mg(2+).

ATPase that binds to both the 70S ribosome and the 50S ribosomal subunit in a nucleotide-independent manner. In Haemophilus ducreyi (strain 35000HP / ATCC 700724), this protein is Ribosome-binding ATPase YchF.